The primary structure comprises 140 residues: Nucleoside diphosphate kinase (140 aa).

6 residues coordinate ATP: Lys-11, Phe-59, Arg-87, Thr-93, Arg-104, and Asn-114. His-117 functions as the Pros-phosphohistidine intermediate in the catalytic mechanism.

Belongs to the NDK family. As to quaternary structure, homotetramer. Mg(2+) serves as cofactor.

The protein localises to the cytoplasm. The catalysed reaction is a 2'-deoxyribonucleoside 5'-diphosphate + ATP = a 2'-deoxyribonucleoside 5'-triphosphate + ADP. The enzyme catalyses a ribonucleoside 5'-diphosphate + ATP = a ribonucleoside 5'-triphosphate + ADP. Major role in the synthesis of nucleoside triphosphates other than ATP. The ATP gamma phosphate is transferred to the NDP beta phosphate via a ping-pong mechanism, using a phosphorylated active-site intermediate. In Mesorhizobium japonicum (strain LMG 29417 / CECT 9101 / MAFF 303099) (Mesorhizobium loti (strain MAFF 303099)), this protein is Nucleoside diphosphate kinase.